We begin with the raw amino-acid sequence, 154 residues long: 6,7-dimethyl-8-ribityllumazine synthase (154 aa).

5-amino-6-(D-ribitylamino)uracil is bound by residues Phe15, Thr47 to Asp49, and Ala71 to Ile73. (2S)-2-hydroxy-3-oxobutyl phosphate is bound at residue Glu76 to Thr77. Catalysis depends on His79, which acts as the Proton donor. Position 104 (Leu104) interacts with 5-amino-6-(D-ribitylamino)uracil. Arg119 contributes to the (2S)-2-hydroxy-3-oxobutyl phosphate binding site.

Belongs to the DMRL synthase family.

It catalyses the reaction (2S)-2-hydroxy-3-oxobutyl phosphate + 5-amino-6-(D-ribitylamino)uracil = 6,7-dimethyl-8-(1-D-ribityl)lumazine + phosphate + 2 H2O + H(+). Its pathway is cofactor biosynthesis; riboflavin biosynthesis; riboflavin from 2-hydroxy-3-oxobutyl phosphate and 5-amino-6-(D-ribitylamino)uracil: step 1/2. Catalyzes the formation of 6,7-dimethyl-8-ribityllumazine by condensation of 5-amino-6-(D-ribitylamino)uracil with 3,4-dihydroxy-2-butanone 4-phosphate. This is the penultimate step in the biosynthesis of riboflavin. This chain is 6,7-dimethyl-8-ribityllumazine synthase, found in Saccharolobus islandicus (strain L.S.2.15 / Lassen #1) (Sulfolobus islandicus).